Here is a 1844-residue protein sequence, read N- to C-terminus: ATPase family AAA domain-containing protein 5 (1844 aa).

Ser-44 carries the phosphoserine modification. Residue Lys-127 forms a Glycyl lysine isopeptide (Lys-Gly) (interchain with G-Cter in SUMO2) linkage. Residues 178–199 show a composition bias toward polar residues; the sequence is QPNTMTSLQNSKKVNPKQGTTK. A disordered region spans residues 178–204; the sequence is QPNTMTSLQNSKKVNPKQGTTKNDFKK. Phosphoserine occurs at positions 219, 306, 311, 354, and 369. The tract at residues 368-384 is interaction with WDR48; sequence KSNVVIQEEELELAVLE. Disordered regions lie at residues 477–499, 580–623, and 658–700; these read KLKKKNKKTLDTGAIPGKNREGN, ESEA…NSQL, and KFTR…SKNI. Composition is skewed to polar residues over residues 580–592 and 599–608; these read ESEASLLNVSTPK and RISSTPTTET. Phosphoserine is present on residues Ser-602, Ser-614, and Ser-621. Residues 664–673 show a composition bias toward basic residues; it reads TPKKSKKKSN. Over residues 685-700 the composition is skewed to polar residues; the sequence is GFTSQIRKASNTSKNI. Phosphoserine is present on Ser-817. Composition is skewed to basic and acidic residues over residues 987–1032 and 1092–1106; these read LEAD…ELSK and RQNLKGKRDEKHEDF. 2 disordered regions span residues 987–1047 and 1092–1118; these read LEAD…SKDS and RQNLKGKRDEKHEDFSGGIDFKGSSDD. Ser-1116 is modified (phosphoserine). 1132–1139 provides a ligand contact to ATP; sequence GPTGVGKT. 2 disordered regions span residues 1203–1235 and 1272–1292; these read KKISSPKKVVTSPRKVPPPSPKSSGPKRALPPK and ITQTKSTNATNSNVKDVGAEE. Positions 1272-1285 are enriched in polar residues; sequence ITQTKSTNATNSNV. The LXCXE motif motif lies at 1428-1432; sequence LVCSE. The segment at 1591–1635 is disordered; that stretch reads SLSSVSSSSNAEESKTGDEESKARDKGNNPETKKSIPCPPKTTAG. The segment covering 1602–1624 has biased composition (basic and acidic residues); that stretch reads EESKTGDEESKARDKGNNPETKK. Residues 1630-1719 are interaction with RAD51 and RFC5; that stretch reads PKTTAGKKCS…AAAEALSFTK (90 aa).

The protein belongs to the AAA ATPase family. Component of a heteropentameric replication factor ATAD5 RFC-like complex composed of one large subunit (ATAD5) and four small subunits (RFC2, RFC3, RFC4 and RFC5). Within the ATAD5 RFC-like complex, interacts with RFC2, RFC4 and RFC5. Within the ATAD5 RFC-like complex, interacts directly via-N terminal with RAD51; the interactions is enhanced under replication stress. Interacts with RB1 predominantly in G1 phase via its LXCXE motif. Interacts with RAD9A in growing cells. The interaction with RAD9A is reduced after exposure to DNA replication-inhibiting agents. Interacts with BRD4. Interacts with PCNA. Interacts with deubiquitinating enzyme USP1, and its associated factor, WDR48. Post-translationally, ATR may stimulate the RAD9A dissociation.

Its subcellular location is the nucleus. Has an important role in DNA replication and in maintaining genome integrity during replication stress. Involved in a RAD9A-related damage checkpoint, a pathway that is important in determining whether DNA damage is compatible with cell survival or whether it requires cell elimination by apoptosis. Modulates the RAD9A interaction with BCL2 and thereby induces DNA damage-induced apoptosis. Promotes PCNA deubiquitination by recruiting the ubiquitin-specific protease 1 (USP1) and WDR48 thereby down-regulating the error-prone damage bypass pathway. As component of the ATAD5 RFC-like complex, regulates the function of the DNA polymerase processivity factor PCNA by unloading the ring-shaped PCNA homotrimer from DNA after replication during the S phase of the cell cycle. This seems to be dependent on its ATPase activity. Plays important roles in restarting stalled replication forks under replication stress, by unloading the PCNA homotrimer from DNA and recruiting RAD51 possibly through an ATR-dependent manner. Ultimately this enables replication fork regression, breakage, and eventual fork restart. Both the PCNA unloading activity and the interaction with WDR48 are required to efficiently recruit RAD51 to stalled replication forks. Promotes the generation of MUS81-mediated single-stranded DNA-associated breaks in response to replication stress, which is an alternative pathway to restart stalled/regressed replication forks. The polypeptide is ATPase family AAA domain-containing protein 5 (Homo sapiens (Human)).